The following is a 141-amino-acid chain: Auxin-responsive protein SAUR63 (141 aa).

It belongs to the ARG7 family. As to expression, expressed in hypocotyls, cotyledons, petioles, young rosette leaves, apical portion of inflorescence stems, stamen filaments and petals.

The protein resides in the cell membrane. Functionally, may promote auxin-stimulated organ elongation, such as hypocotyls, stamen filaments and petals. The chain is Auxin-responsive protein SAUR63 from Arabidopsis thaliana (Mouse-ear cress).